A 266-amino-acid chain; its full sequence is MSIYKDINIASAKPSLKERKNIKHYALDCLNIDEKNNAPLFKTLLEDAMKVSQKEILLIVGGSSFYLKSILEGLSSMPKLNNDQILKIEREIATLTNPYAFLKSIDPNMAFKIHSNDTYRIHKALEIFYATHTPPSEYFKKNPKKPFEHAITLFALCIEKTVLHNRIKQRTKNMLDCGLIEEIKALYTQYPKDSQPFKAIGVKESILYLEKQLTLKELEEAIVSNTIKLAKRQNTFNKTQFNNLYVGSVEEVRHAILKRSKSGIKE.

It belongs to the IPP transferase family. As to quaternary structure, monomer. Requires Mg(2+) as cofactor.

It carries out the reaction adenosine(37) in tRNA + dimethylallyl diphosphate = N(6)-dimethylallyladenosine(37) in tRNA + diphosphate. In terms of biological role, catalyzes the transfer of a dimethylallyl group onto the adenine at position 37 in tRNAs that read codons beginning with uridine, leading to the formation of N6-(dimethylallyl)adenosine (i(6)A). This chain is tRNA dimethylallyltransferase (miaA), found in Helicobacter acinonychis (strain Sheeba).